A 164-amino-acid chain; its full sequence is Cold-inducible RNA-binding protein (164 aa).

The RRM domain maps to 6–84 (GKLFVGGLSF…RQIRVDQAGK (79 aa)). Residues 65 to 164 (AGMNGKTVDG…SYRDSYDSYG (100 aa)) are disordered. Over residues 93–118 (YRGGSSGGGRGFFRGGRGRGGGGYGG) the composition is skewed to gly residues. A compositionally biased stretch (basic and acidic residues) spans 155–164 (SYRDSYDSYG).

Interacts with prmt1. Interacts with elavl1/elrA (via RRM3). Associates with ribosomes. In terms of processing, methylated on arginine residues within RGG motifs. Methylation by prmt1 promotes cytoplasmic accumulation.

It localises to the nucleus. Its subcellular location is the nucleoplasm. It is found in the cytoplasm. Functionally, cold-inducible mRNA binding protein. Acts cooperatively with elavl1/elrA to stabilize AU-rich element (ARE)-containing mRNAs by binding to them and inhibiting their deadenylation. Essential for embryonic gastrulation and neural development, acting to maintain the expression of a set of adhesion molecules, and cell movement during embryogenesis. Required for pronephros development. May play a role in hibernation. This chain is Cold-inducible RNA-binding protein, found in Aquarana catesbeiana (American bullfrog).